The following is a 264-amino-acid chain: Virulence plasmid protein pGP3-D (264 aa).

The chain is Virulence plasmid protein pGP3-D from Chlamydia psittaci (Chlamydophila psittaci).